Consider the following 60-residue polypeptide: Ixodegrin-like peptide (60 aa).

Positions 1–21 (MNAAFIAALLILGALTLDAMA) are cleaved as a signal peptide. Residues 49–51 (RGD) carry the Cell attachment site motif.

It belongs to the ixodegrin family. Contains 3 disulfide bonds. As to expression, expressed in salivary glands.

Its subcellular location is the secreted. Its function is as follows. Tick salivary platelet aggregation inhibitor that plays an important part in the anti-hemostatic strategy of ticks. Inhibits platelet aggregation induced by ADP, thrombin and thromboxane A2 (TXA2). Blocks platelet adhesion to soluble collagen (most probably through the binding to alpha-2/beta-1 integrin (ITGA2/ITGB1)) and binds to purified glycoprotein IIb/IIIa (ITGA2B/ITGB3) in a dose-dependent manner. In vivo, reduces thrombus weight effectively in a rat arteriovenous shunt model and inhibits thrombosis in a carrageenan-induced mouse tail thrombosis model. The polypeptide is Ixodegrin-like peptide (Ixodes scapularis (Black-legged tick)).